The chain runs to 498 residues: MATCLDSLGPLLGGAANSTDAANYICNRFTDTSSAVDATYLLFSAYLVFAMQLGFAMLCAGSVRAKNSMNIMLTNVLDAAAGALFYYLFGFAFAFGTPSKGFIGKQFFGLKHMPQTGYDYDFFLFQWAFAIAAAGITSGSIAERTRFSAYLIYSAFLTGFVYPVVSHWFWSTDGWASAGRLTGPLLFKSGVIDFAGSGVVHLVGGIAGLWGAFIEGPRIGRFDAAGRTVAMKGHSASLVVLGTFLLWFGWFGFNPGSFTTISKIYGESGTIDGQWSAVGRTAVTTSLAGSVAALTTLYGKRWLTGHWNVTDVCNGLLGGFAAITAGCSVVDPWASVICGFVSAWVLIGCNKLSLILKFDDPLEATQLHAGCGAWGIIFTALFARREYVELIYGVPGRPYGLFMGGGGRLLAAHIVQILVIVGWVSATMGTLFYVLHRFGLLRVSPATEMEGMDPTCHGGFGYVDEDEGERRVRAKSAAETARVEPRKSPEQAAAGQFV.

11 helical membrane passes run 41–61 (LLFS…LCAG), 76–96 (VLDA…FAFG), 122–142 (FFLF…GSIA), 150–170 (YLIY…HWFW), 194–214 (FAGS…GAFI), 238–258 (LVVL…PGSF), 277–299 (AVGR…TLYG), 307–327 (WNVT…TAGC), 329–349 (VVDP…LIGC), 362–382 (LEAT…TALF), and 414–434 (IVQI…LFYV). Residues 473–498 (RAKSAAETARVEPRKSPEQAAAGQFV) are disordered.

The protein belongs to the ammonia transporter channel (TC 1.A.11.2) family. Expressed in roots.

Its subcellular location is the membrane. Functionally, ammonium transporter probably involved in ammonium uptake from the soil. The chain is Ammonium transporter 1 member 3 (AMT1-3) from Oryza sativa subsp. japonica (Rice).